Reading from the N-terminus, the 143-residue chain is Transcriptional regulator MraZ (143 aa).

SpoVT-AbrB domains lie at 5-47 (EYHH…PIEE) and 76-119 (AMES…SAER).

It belongs to the MraZ family. Forms oligomers.

It is found in the cytoplasm. Its subcellular location is the nucleoid. The protein is Transcriptional regulator MraZ of Lactobacillus johnsonii (strain CNCM I-12250 / La1 / NCC 533).